The sequence spans 151 residues: Transmembrane protein 239 (151 aa).

3 consecutive transmembrane segments (helical) span residues 61–81 (LWGLEGTLYLLLALMLCHALF), 85–105 (SYLLSSLWPVVAVMWSHLLPA), and 116–138 (ALLFAASFLLLFSTLLSLVGLLT).

It is found in the membrane. The polypeptide is Transmembrane protein 239 (Tmem239) (Mus musculus (Mouse)).